A 689-amino-acid polypeptide reads, in one-letter code: Beta-adrenergic receptor kinase 1 (689 aa).

Residues 1-190 form an N-terminal region; sequence MADLEAVLAD…ELNIHLTMND (190 aa). The RGS domain maps to 54–175; the sequence is TFEKIFSQKL…IESDKFTRFC (122 aa). The region spanning 191-453 is the Protein kinase domain; sequence FSVHRIIGRG…AQEVKESPFF (263 aa). ATP is bound by residues 197–205 and K220; that span reads IGRGGFGEV. The active-site Proton acceptor is D317. Residues 454–521 enclose the AGC-kinase C-terminal domain; sequence RSLDWQMVFL…TISERWQQEV (68 aa). One can recognise a PH domain in the interval 558 to 652; sequence DCIVHGYMSK…WKKELRDAYR (95 aa). S670 carries the phosphoserine modification.

It belongs to the protein kinase superfamily. AGC Ser/Thr protein kinase family. GPRK subfamily. As to quaternary structure, interacts with the heterodimer formed by GNB1 and GNG2. Interacts with GIT1. Interacts with, and phosphorylates chemokine-stimulated CCR5. Interacts with ARRB1. Interacts with LPAR1 and LPAR2. Interacts with RALA in response to LPAR1 activation. ADRBK1 and RALA mutually inhibit each other's binding to LPAR1. Interacts with ADRB2.

Its subcellular location is the cytoplasm. It is found in the cell membrane. It localises to the postsynapse. The protein resides in the presynapse. The enzyme catalyses [beta-adrenergic receptor] + ATP = [beta-adrenergic receptor]-phosphate + ADP + H(+). In contrast to other AGC family kinases, the catalytic activity is solely regulated by the binding of substrates and ligands, not by phosphorylation of the kinase domain. Specifically phosphorylates the agonist-occupied form of the beta-adrenergic and closely related receptors, probably inducing a desensitization of them. Key regulator of LPAR1 signaling. Competes with RALA for binding to LPAR1 thus affecting the signaling properties of the receptor. Desensitizes LPAR1 and LPAR2 in a phosphorylation-independent manner. Positively regulates ciliary smoothened (SMO)-dependent Hedgehog (Hh) signaling pathway by facilitating the trafficking of SMO into the cilium and the stimulation of SMO activity. Inhibits relaxation of airway smooth muscle in response to blue light. The protein is Beta-adrenergic receptor kinase 1 of Mus musculus (Mouse).